Here is a 311-residue protein sequence, read N- to C-terminus: Small ribosomal subunit protein uS3 (311 aa).

A KH type-2 domain is found at 17–86; it reads MDEYFAEQLN…NPQIDAQEVK (70 aa). Residues 190-267 are disordered; the sequence is PDSYTTTEPS…EPQAEVAEDL (78 aa). Residues 194-204 show a composition bias toward low complexity; sequence TTTEPSEPVTE. The span at 205 to 231 shows a compositional bias: basic and acidic residues; it reads PVEKPAEKPAAKPAEKPVEAPKKESAA. Low complexity predominate over residues 232–247; it reads KPKTPAVAPEKPVETA. A compositionally biased stretch (acidic residues) spans 248-267; it reads EVAEPEEAEEEPQAEVAEDL.

It belongs to the universal ribosomal protein uS3 family. In terms of assembly, part of the 30S ribosomal subunit.

Its function is as follows. Binds the lower part of the 30S subunit head. This Methanosarcina barkeri (strain Fusaro / DSM 804) protein is Small ribosomal subunit protein uS3.